The following is a 780-amino-acid chain: Protein phosphatase 1 regulatory subunit 21 (780 aa).

2 coiled-coil regions span residues M1–L207 and E556–T607. Residues E84–Q104 form a disordered region. Over residues E95–Q104 the composition is skewed to low complexity. Phosphothreonine is present on T652. Residues Y693 to L742 adopt a coiled-coil conformation. Residues R760–R780 form a disordered region.

Component of the FERRY complex, composed of five subunits: TBCK, PPP1R21, FERRY3, CRYZL1 and GATAD1, with a ratio of 1:2:1:2:4 respectively. PPP1R21 serves as a binding hub connecting all five complex subunits to mediate the binding to specific mitochondrial mRNAs. Interacts with the GTP-bound form of RAB5A (via its C-terminal region); linking the mRNP complex onto trafficking endosomes for active mRNA transport. Interacts with PPP1CA.

The protein resides in the early endosome. Its function is as follows. Component of the FERRY complex (Five-subunit Endosomal Rab5 and RNA/ribosome intermediary). The FERRY complex directly interacts with mRNAs and RAB5A, and functions as a RAB5A effector involved in the localization and the distribution of specific mRNAs most likely by mediating their endosomal transport. The complex recruits mRNAs and ribosomes to early endosomes through direct mRNA-interaction. In the complex, PPP1R21 serves as a binding hub connecting all five complex subunits and mediating the binding to mRNA and early endosomes via RAB5A. Putative regulator of protein phosphatase 1 (PP1) activity. May play a role in the endosomal sorting process or in endosome maturation pathway. This is Protein phosphatase 1 regulatory subunit 21 (PPP1R21) from Homo sapiens (Human).